A 93-amino-acid chain; its full sequence is Exodeoxyribonuclease 7 small subunit (93 aa).

Residues 1–17 (MAKSSASSLSSAKPVAA) are compositionally biased toward low complexity. The segment at 1–22 (MAKSSASSLSSAKPVAAGPDAS) is disordered.

The protein belongs to the XseB family. Heterooligomer composed of large and small subunits.

Its subcellular location is the cytoplasm. It carries out the reaction Exonucleolytic cleavage in either 5'- to 3'- or 3'- to 5'-direction to yield nucleoside 5'-phosphates.. In terms of biological role, bidirectionally degrades single-stranded DNA into large acid-insoluble oligonucleotides, which are then degraded further into small acid-soluble oligonucleotides. The chain is Exodeoxyribonuclease 7 small subunit from Polaromonas naphthalenivorans (strain CJ2).